The primary structure comprises 108 residues: Ribulose bisphosphate carboxylase small subunit (108 aa).

The protein belongs to the RuBisCO small chain family. As to quaternary structure, heterohexadecamer of 8 large and 8 small subunits.

Its function is as follows. RuBisCO catalyzes two reactions: the carboxylation of D-ribulose 1,5-bisphosphate, the primary event in carbon dioxide fixation, as well as the oxidative fragmentation of the pentose substrate. Both reactions occur simultaneously and in competition at the same active site. Although the small subunit is not catalytic it is essential for maximal activity. The protein is Ribulose bisphosphate carboxylase small subunit of Nitrobacter vulgaris.